The chain runs to 63 residues: Large ribosomal subunit protein bL28 (63 aa).

It belongs to the bacterial ribosomal protein bL28 family.

This chain is Large ribosomal subunit protein bL28, found in Citrifermentans bemidjiense (strain ATCC BAA-1014 / DSM 16622 / JCM 12645 / Bem) (Geobacter bemidjiensis).